Reading from the N-terminus, the 516-residue chain is uncharacterized protein (516 aa).

PFTB repeat units follow at residues 45–86 (RQDA…QRAD) and 401–443 (DERA…DGSE).

This is an uncharacterized protein from Bradyrhizobium diazoefficiens (strain JCM 10833 / BCRC 13528 / IAM 13628 / NBRC 14792 / USDA 110).